A 101-amino-acid polypeptide reads, in one-letter code: Urease subunit beta (101 aa).

It belongs to the urease beta subunit family. As to quaternary structure, heterotrimer of UreA (gamma), UreB (beta) and UreC (alpha) subunits. Three heterotrimers associate to form the active enzyme.

It localises to the cytoplasm. It carries out the reaction urea + 2 H2O + H(+) = hydrogencarbonate + 2 NH4(+). It participates in nitrogen metabolism; urea degradation; CO(2) and NH(3) from urea (urease route): step 1/1. This chain is Urease subunit beta, found in Mesorhizobium japonicum (strain LMG 29417 / CECT 9101 / MAFF 303099) (Mesorhizobium loti (strain MAFF 303099)).